Here is a 244-residue protein sequence, read N- to C-terminus: 3-deoxy-manno-octulosonate cytidylyltransferase (244 aa).

The protein belongs to the KdsB family.

It is found in the cytoplasm. It catalyses the reaction 3-deoxy-alpha-D-manno-oct-2-ulosonate + CTP = CMP-3-deoxy-beta-D-manno-octulosonate + diphosphate. Its pathway is nucleotide-sugar biosynthesis; CMP-3-deoxy-D-manno-octulosonate biosynthesis; CMP-3-deoxy-D-manno-octulosonate from 3-deoxy-D-manno-octulosonate and CTP: step 1/1. It functions in the pathway bacterial outer membrane biogenesis; lipopolysaccharide biosynthesis. Activates KDO (a required 8-carbon sugar) for incorporation into bacterial lipopolysaccharide in Gram-negative bacteria. This is 3-deoxy-manno-octulosonate cytidylyltransferase from Rickettsia bellii (strain OSU 85-389).